A 257-amino-acid polypeptide reads, in one-letter code: Imidazole glycerol phosphate synthase subunit HisF (257 aa).

Catalysis depends on residues aspartate 11 and aspartate 130.

Belongs to the HisA/HisF family. Heterodimer of HisH and HisF.

It is found in the cytoplasm. The enzyme catalyses 5-[(5-phospho-1-deoxy-D-ribulos-1-ylimino)methylamino]-1-(5-phospho-beta-D-ribosyl)imidazole-4-carboxamide + L-glutamine = D-erythro-1-(imidazol-4-yl)glycerol 3-phosphate + 5-amino-1-(5-phospho-beta-D-ribosyl)imidazole-4-carboxamide + L-glutamate + H(+). Its pathway is amino-acid biosynthesis; L-histidine biosynthesis; L-histidine from 5-phospho-alpha-D-ribose 1-diphosphate: step 5/9. Functionally, IGPS catalyzes the conversion of PRFAR and glutamine to IGP, AICAR and glutamate. The HisF subunit catalyzes the cyclization activity that produces IGP and AICAR from PRFAR using the ammonia provided by the HisH subunit. The chain is Imidazole glycerol phosphate synthase subunit HisF from Psychromonas ingrahamii (strain DSM 17664 / CCUG 51855 / 37).